The primary structure comprises 162 residues: Phosphopantetheine adenylyltransferase (162 aa).

Residue Ser9 participates in substrate binding. ATP contacts are provided by residues 9 to 10 and His17; that span reads SF. Residues Lys41, Leu73, and Lys87 each contribute to the substrate site. ATP is bound by residues 88–90, Glu98, and 122–128; these read GLR and YSFLSSS.

Belongs to the bacterial CoaD family. As to quaternary structure, homohexamer. Mg(2+) is required as a cofactor.

It is found in the cytoplasm. The catalysed reaction is (R)-4'-phosphopantetheine + ATP + H(+) = 3'-dephospho-CoA + diphosphate. Its pathway is cofactor biosynthesis; coenzyme A biosynthesis; CoA from (R)-pantothenate: step 4/5. Its function is as follows. Reversibly transfers an adenylyl group from ATP to 4'-phosphopantetheine, yielding dephospho-CoA (dPCoA) and pyrophosphate. This is Phosphopantetheine adenylyltransferase from Salinispora tropica (strain ATCC BAA-916 / DSM 44818 / JCM 13857 / NBRC 105044 / CNB-440).